We begin with the raw amino-acid sequence, 250 residues long: 5'/3'-nucleotidase SurE (250 aa).

The a divalent metal cation site is built by D8, D9, S39, and N92.

The protein belongs to the SurE nucleotidase family. The cofactor is a divalent metal cation.

The protein localises to the cytoplasm. The catalysed reaction is a ribonucleoside 5'-phosphate + H2O = a ribonucleoside + phosphate. It carries out the reaction a ribonucleoside 3'-phosphate + H2O = a ribonucleoside + phosphate. It catalyses the reaction [phosphate](n) + H2O = [phosphate](n-1) + phosphate + H(+). Its function is as follows. Nucleotidase with a broad substrate specificity as it can dephosphorylate various ribo- and deoxyribonucleoside 5'-monophosphates and ribonucleoside 3'-monophosphates with highest affinity to 3'-AMP. Also hydrolyzes polyphosphate (exopolyphosphatase activity) with the preference for short-chain-length substrates (P20-25). Might be involved in the regulation of dNTP and NTP pools, and in the turnover of 3'-mononucleotides produced by numerous intracellular RNases (T1, T2, and F) during the degradation of various RNAs. The protein is 5'/3'-nucleotidase SurE of Wigglesworthia glossinidia brevipalpis.